The chain runs to 320 residues: tRNA (guanosine(34)-2'-O)-methyltransferase (320 aa).

5 residues coordinate S-adenosyl-L-methionine: Gly-53, Trp-55, Asp-81, Asp-97, and Asp-122. The Proton acceptor role is filled by Lys-162.

It belongs to the class I-like SAM-binding methyltransferase superfamily. RNA methyltransferase RlmE family. TRM7 subfamily. Interacts with CG33172/WDR6.

The protein resides in the cytoplasm. The catalysed reaction is cytidine(32)/guanosine(34) in tRNA + 2 S-adenosyl-L-methionine = 2'-O-methylcytidine(32)/2'-O-methylguanosine(34) in tRNA + 2 S-adenosyl-L-homocysteine + 2 H(+). Methylates the 2'-O-ribose of nucleotides at position 34 of the tRNA anticodon loop of substrate tRNAs. May require WDR6 for methylation of the nucleotide at position 34 of the anticodon loop of substrate tRNAs. Plays a role in neurogenesis. Requisite for RNA-mediated gene silencing. Modifies position 34 in tRNA(Leu(CAA)), tRNA(Leu(CAG)), tRNA(Phe(GAA)), and tRNA(Trp(CCA)). The protein is tRNA (guanosine(34)-2'-O)-methyltransferase of Drosophila melanogaster (Fruit fly).